The following is a 169-amino-acid chain: Der GTPase-activating protein YihI (169 aa).

Disordered regions lie at residues 1 to 92 (MKPS…EKPM) and 146 to 169 (SYDD…LRGN). Residues 10 to 19 (SKGHAKARRK) show a composition bias toward basic residues. The span at 20 to 30 (TREELDQEARD) shows a compositional bias: basic and acidic residues. Positions 31–40 (RKRQKKRRGH) are enriched in basic residues. Polar residues predominate over residues 49 to 58 (GNTTSGSKGQ). Positions 147–159 (YDDDEEEEEDEKQ) are enriched in acidic residues. The span at 160–169 (EDMMRLLRGN) shows a compositional bias: basic and acidic residues.

Belongs to the YihI family. Interacts with Der.

Functionally, a GTPase-activating protein (GAP) that modifies Der/EngA GTPase function. May play a role in ribosome biogenesis. The sequence is that of Der GTPase-activating protein YihI from Escherichia coli O1:K1 / APEC.